Consider the following 618-residue polypeptide: Dihydroxy-acid dehydratase (618 aa).

Asp81 is a binding site for Mg(2+). Position 122 (Cys122) interacts with [2Fe-2S] cluster. Asp123 and Lys124 together coordinate Mg(2+). At Lys124 the chain carries N6-carboxylysine. Position 199 (Cys199) interacts with [2Fe-2S] cluster. Glu495 is a Mg(2+) binding site. Ser521 acts as the Proton acceptor in catalysis.

This sequence belongs to the IlvD/Edd family. As to quaternary structure, homodimer. The cofactor is [2Fe-2S] cluster. Requires Mg(2+) as cofactor.

It catalyses the reaction (2R)-2,3-dihydroxy-3-methylbutanoate = 3-methyl-2-oxobutanoate + H2O. The enzyme catalyses (2R,3R)-2,3-dihydroxy-3-methylpentanoate = (S)-3-methyl-2-oxopentanoate + H2O. The protein operates within amino-acid biosynthesis; L-isoleucine biosynthesis; L-isoleucine from 2-oxobutanoate: step 3/4. Its pathway is amino-acid biosynthesis; L-valine biosynthesis; L-valine from pyruvate: step 3/4. Its function is as follows. Functions in the biosynthesis of branched-chain amino acids. Catalyzes the dehydration of (2R,3R)-2,3-dihydroxy-3-methylpentanoate (2,3-dihydroxy-3-methylvalerate) into 2-oxo-3-methylpentanoate (2-oxo-3-methylvalerate) and of (2R)-2,3-dihydroxy-3-methylbutanoate (2,3-dihydroxyisovalerate) into 2-oxo-3-methylbutanoate (2-oxoisovalerate), the penultimate precursor to L-isoleucine and L-valine, respectively. This Blochmanniella floridana protein is Dihydroxy-acid dehydratase.